We begin with the raw amino-acid sequence, 406 residues long: MANVLDTLMERGYIKQFTHEAETRELLEKEKVTFYIGFDPTADSLHVGHFIAMMFMAHMQKAGHRPIALIGGGTATIGDPSGKTDMRKMMTNETIAHNVACIKKQMEKFIDFSDDKAILVNNADWLLNQNYVEFLREVGVHFSVNRMLSAECFKQRLERGLSFLEFNYMLMQGYDFYVLNKKYNCKMELGGDDQWSNMIAGVELVRKKSQKSAYAMTCTLLTNSEGQKMGKTVNGALWLDPEKTSPYEFYQYWRNVNDADVEKCLKLLTFIPMDEVRRLSSLEGSQINEAKKVLAFEVTKLVHGEEEATKAKQAAEALFGKGGDMSNVPTYEMGKDKLGSELLDILVEAEIVPSKAEGKRLVKQGGLSLNGEKVADFKKTLEEADFENGEVLIKRGKKNYNKIVLA.

Y35 lines the L-tyrosine pocket. Positions 40-49 (PTADSLHVGH) match the 'HIGH' region motif. Residues Y168 and Q172 each contribute to the L-tyrosine site. A 'KMSKS' region motif is present at residues 228–232 (KMGKT). K231 is an ATP binding site. An S4 RNA-binding domain is found at 340 to 404 (SELLDILVEA…RGKKNYNKIV (65 aa)).

This sequence belongs to the class-I aminoacyl-tRNA synthetase family. TyrS type 1 subfamily. Homodimer.

The protein localises to the cytoplasm. The enzyme catalyses tRNA(Tyr) + L-tyrosine + ATP = L-tyrosyl-tRNA(Tyr) + AMP + diphosphate + H(+). Functionally, catalyzes the attachment of tyrosine to tRNA(Tyr) in a two-step reaction: tyrosine is first activated by ATP to form Tyr-AMP and then transferred to the acceptor end of tRNA(Tyr). In Clostridium perfringens (strain SM101 / Type A), this protein is Tyrosine--tRNA ligase.